The following is a 299-amino-acid chain: Peroxisomal biogenesis factor 19 (299 aa).

The disordered stretch occupies residues 1–63; that stretch reads MAAAEGDGGV…SPGDTAKDAL (63 aa). Ala-2 carries the post-translational modification N-acetylalanine. Residues 2–56 are docking to the peroxisome membrane and binding to PEX3; it reads AAAEGDGGVRAEADRELEELLESALDDFDKAKPSPAPPPTTTAPDASGPQKRSPG. The necessary for PEX19 function on peroxisome biogenesis stretch occupies residues 2-91; it reads AAAEGDGGVR…QATAEFEKAM (90 aa). Residues 16-27 are compositionally biased toward acidic residues; sequence RELEELLESALD. Phosphoserine occurs at positions 35, 54, and 66. At Thr-236 the chain carries Phosphothreonine. Position 296 is a cysteine methyl ester (Cys-296). The S-farnesyl cysteine moiety is linked to residue Cys-296. The propeptide at 297–299 is removed in mature form; sequence LIM.

It belongs to the peroxin-19 family. In terms of assembly, interacts with a broad range of peroxisomal membrane proteins, including PEX3, PEX10, PEX11A, PEX11B, PEX12, PEX13, PEX14 and PEX16, PXMP2/PMP22, PXMP4/PMP24, SLC25A17/PMP34, ABCD1/ALDP, ABCD2/ALDRP, and ABCD3/PMP70. Also interacts with the tumor suppressor CDKN2A/p19ARF.

The protein localises to the cytoplasm. It is found in the peroxisome membrane. In terms of biological role, necessary for early peroxisomal biogenesis. Acts both as a cytosolic chaperone and as an import receptor for peroxisomal membrane proteins (PMPs). Binds and stabilizes newly synthesized PMPs in the cytoplasm by interacting with their hydrophobic membrane-spanning domains, and targets them to the peroxisome membrane by binding to the integral membrane protein PEX3. Excludes CDKN2A from the nucleus and prevents its interaction with MDM2, which results in active degradation of TP53. This is Peroxisomal biogenesis factor 19 (PEX19) from Bos taurus (Bovine).